The primary structure comprises 116 residues: Nucleoid-associated protein SACE_0254 (116 aa).

Positions 90–116 (LQQEKMGPVTGALGGGQGLGGLGLPGL) are disordered. Positions 101 to 116 (ALGGGQGLGGLGLPGL) are enriched in gly residues.

It belongs to the YbaB/EbfC family. Homodimer.

The protein resides in the cytoplasm. The protein localises to the nucleoid. Binds to DNA and alters its conformation. May be involved in regulation of gene expression, nucleoid organization and DNA protection. This is Nucleoid-associated protein SACE_0254 from Saccharopolyspora erythraea (strain ATCC 11635 / DSM 40517 / JCM 4748 / NBRC 13426 / NCIMB 8594 / NRRL 2338).